The chain runs to 466 residues: UDP-N-acetylmuramoylalanine--D-glutamate ligase (466 aa).

Position 117–123 (117–123 (GTKGKTT)) interacts with ATP.

The protein belongs to the MurCDEF family.

The protein resides in the cytoplasm. The catalysed reaction is UDP-N-acetyl-alpha-D-muramoyl-L-alanine + D-glutamate + ATP = UDP-N-acetyl-alpha-D-muramoyl-L-alanyl-D-glutamate + ADP + phosphate + H(+). It participates in cell wall biogenesis; peptidoglycan biosynthesis. Cell wall formation. Catalyzes the addition of glutamate to the nucleotide precursor UDP-N-acetylmuramoyl-L-alanine (UMA). This chain is UDP-N-acetylmuramoylalanine--D-glutamate ligase, found in Roseiflexus sp. (strain RS-1).